The primary structure comprises 295 residues: tRNA(Ile)-lysidine synthase (295 aa).

Residue 10 to 15 coordinates ATP; it reads SGGPDS.

Belongs to the tRNA(Ile)-lysidine synthase family.

The protein localises to the cytoplasm. The catalysed reaction is cytidine(34) in tRNA(Ile2) + L-lysine + ATP = lysidine(34) in tRNA(Ile2) + AMP + diphosphate + H(+). Functionally, ligates lysine onto the cytidine present at position 34 of the AUA codon-specific tRNA(Ile) that contains the anticodon CAU, in an ATP-dependent manner. Cytidine is converted to lysidine, thus changing the amino acid specificity of the tRNA from methionine to isoleucine. The sequence is that of tRNA(Ile)-lysidine synthase from Malacoplasma penetrans (strain HF-2) (Mycoplasma penetrans).